The primary structure comprises 218 residues: 3-dehydroquinate dehydratase (218 aa).

Residues 29–31 (EFR) and Arg-56 contribute to the 3-dehydroquinate site. Residue His-116 is the Proton donor/acceptor of the active site. The Schiff-base intermediate with substrate role is filled by Lys-142. Arg-180, Ser-200, and Gln-204 together coordinate 3-dehydroquinate.

It belongs to the type-I 3-dehydroquinase family. In terms of assembly, homodimer.

It carries out the reaction 3-dehydroquinate = 3-dehydroshikimate + H2O. Its pathway is metabolic intermediate biosynthesis; chorismate biosynthesis; chorismate from D-erythrose 4-phosphate and phosphoenolpyruvate: step 3/7. In terms of biological role, involved in the third step of the chorismate pathway, which leads to the biosynthesis of aromatic amino acids. Catalyzes the cis-dehydration of 3-dehydroquinate (DHQ) and introduces the first double bond of the aromatic ring to yield 3-dehydroshikimate. The sequence is that of 3-dehydroquinate dehydratase from Methanococcus maripaludis (strain C7 / ATCC BAA-1331).